Consider the following 302-residue polypeptide: Large ribosomal subunit protein uL29m (302 aa).

A mitochondrion-targeting transit peptide spans 1–38 (MASSGAARPAASRVLQRCQPFSSSTSCAAPVTTWRTLA). The interval 255-302 (EPVADHLETPETSGQEKVGELSPAGAVDPSTILASKTGKPVTDAPRSS) is disordered.

The protein belongs to the universal ribosomal protein uL29 family. As to quaternary structure, component of the mitochondrial large ribosomal subunit. Mature mitochondrial ribosomes consist of a small (37S) and a large (54S) subunit. The 37S subunit contains at least 33 different proteins and 1 molecule of RNA (15S). The 54S subunit contains at least 45 different proteins and 1 molecule of RNA (21S).

The protein resides in the mitochondrion. In Pyricularia oryzae (strain 70-15 / ATCC MYA-4617 / FGSC 8958) (Rice blast fungus), this protein is Large ribosomal subunit protein uL29m (MRPL4).